The primary structure comprises 232 residues: Large ribosomal subunit protein uL1 (232 aa).

It belongs to the universal ribosomal protein uL1 family. Part of the 50S ribosomal subunit.

Functionally, binds directly to 23S rRNA. The L1 stalk is quite mobile in the ribosome, and is involved in E site tRNA release. Protein L1 is also a translational repressor protein, it controls the translation of the L11 operon by binding to its mRNA. This is Large ribosomal subunit protein uL1 from Burkholderia multivorans (strain ATCC 17616 / 249).